A 98-amino-acid chain; its full sequence is Large ribosomal subunit protein uL23 (98 aa).

The protein belongs to the universal ribosomal protein uL23 family. As to quaternary structure, part of the 50S ribosomal subunit. Contacts protein L29, and trigger factor when it is bound to the ribosome.

One of the early assembly proteins it binds 23S rRNA. One of the proteins that surrounds the polypeptide exit tunnel on the outside of the ribosome. Forms the main docking site for trigger factor binding to the ribosome. The polypeptide is Large ribosomal subunit protein uL23 (Acidothermus cellulolyticus (strain ATCC 43068 / DSM 8971 / 11B)).